We begin with the raw amino-acid sequence, 678 residues long: Glycine--tRNA ligase beta subunit (678 aa).

Belongs to the class-II aminoacyl-tRNA synthetase family. In terms of assembly, tetramer of two alpha and two beta subunits.

The protein resides in the cytoplasm. It carries out the reaction tRNA(Gly) + glycine + ATP = glycyl-tRNA(Gly) + AMP + diphosphate. In Sulfurihydrogenibium sp. (strain YO3AOP1), this protein is Glycine--tRNA ligase beta subunit.